The primary structure comprises 210 residues: Thiamine-phosphate synthase (210 aa).

Residues 39-43 and asparagine 71 each bind 4-amino-2-methyl-5-(diphosphooxymethyl)pyrimidine; that span reads QLREK. Residues aspartate 72 and aspartate 91 each contribute to the Mg(2+) site. Serine 110 serves as a coordination point for 4-amino-2-methyl-5-(diphosphooxymethyl)pyrimidine. 2-[(2R,5Z)-2-carboxy-4-methylthiazol-5(2H)-ylidene]ethyl phosphate is bound at residue 134 to 136; sequence TPT. Lysine 137 lines the 4-amino-2-methyl-5-(diphosphooxymethyl)pyrimidine pocket. A 2-[(2R,5Z)-2-carboxy-4-methylthiazol-5(2H)-ylidene]ethyl phosphate-binding site is contributed by glycine 163.

This sequence belongs to the thiamine-phosphate synthase family. Requires Mg(2+) as cofactor.

It catalyses the reaction 2-[(2R,5Z)-2-carboxy-4-methylthiazol-5(2H)-ylidene]ethyl phosphate + 4-amino-2-methyl-5-(diphosphooxymethyl)pyrimidine + 2 H(+) = thiamine phosphate + CO2 + diphosphate. The enzyme catalyses 2-(2-carboxy-4-methylthiazol-5-yl)ethyl phosphate + 4-amino-2-methyl-5-(diphosphooxymethyl)pyrimidine + 2 H(+) = thiamine phosphate + CO2 + diphosphate. It carries out the reaction 4-methyl-5-(2-phosphooxyethyl)-thiazole + 4-amino-2-methyl-5-(diphosphooxymethyl)pyrimidine + H(+) = thiamine phosphate + diphosphate. The protein operates within cofactor biosynthesis; thiamine diphosphate biosynthesis; thiamine phosphate from 4-amino-2-methyl-5-diphosphomethylpyrimidine and 4-methyl-5-(2-phosphoethyl)-thiazole: step 1/1. In terms of biological role, condenses 4-methyl-5-(beta-hydroxyethyl)thiazole monophosphate (THZ-P) and 2-methyl-4-amino-5-hydroxymethyl pyrimidine pyrophosphate (HMP-PP) to form thiamine monophosphate (TMP). The polypeptide is Thiamine-phosphate synthase (Campylobacter jejuni (strain RM1221)).